Consider the following 587-residue polypeptide: Arginine--tRNA ligase (587 aa).

Positions 127 to 137 match the 'HIGH' region motif; the sequence is PNLAKEMHVGH.

Belongs to the class-I aminoacyl-tRNA synthetase family. As to quaternary structure, monomer.

The protein localises to the cytoplasm. It catalyses the reaction tRNA(Arg) + L-arginine + ATP = L-arginyl-tRNA(Arg) + AMP + diphosphate. The chain is Arginine--tRNA ligase from Pseudomonas aeruginosa (strain ATCC 15692 / DSM 22644 / CIP 104116 / JCM 14847 / LMG 12228 / 1C / PRS 101 / PAO1).